The primary structure comprises 235 residues: UPF0758 protein CD630_11440 (235 aa).

Residues 113 to 235 (KIMNPWDIQR…YFSFKENMII (123 aa)) form the MPN domain. Histidine 184, histidine 186, and aspartate 197 together coordinate Zn(2+). The JAMM motif signature appears at 184 to 197 (HNHPSGSVEPSRED).

This sequence belongs to the UPF0758 family.

This Clostridioides difficile (strain 630) (Peptoclostridium difficile) protein is UPF0758 protein CD630_11440.